The primary structure comprises 312 residues: Ribosomal RNA small subunit methyltransferase H (312 aa).

S-adenosyl-L-methionine contacts are provided by residues 32-34 (AGH), D51, F78, D99, and Q106.

Belongs to the methyltransferase superfamily. RsmH family.

It localises to the cytoplasm. The enzyme catalyses cytidine(1402) in 16S rRNA + S-adenosyl-L-methionine = N(4)-methylcytidine(1402) in 16S rRNA + S-adenosyl-L-homocysteine + H(+). Specifically methylates the N4 position of cytidine in position 1402 (C1402) of 16S rRNA. The chain is Ribosomal RNA small subunit methyltransferase H from Exiguobacterium sibiricum (strain DSM 17290 / CCUG 55495 / CIP 109462 / JCM 13490 / 255-15).